A 364-amino-acid chain; its full sequence is MKVLFAGGGTGGHLYPGVAMASELKKVVPGVEISFAGTPAGIEATEVPRLGYPLHLLPVRGLKRGRSLRDLAANVGVLKDFGSSLMQAFSIIRKETPNVVVGTGGYVSAPLLLAAQLSGCKTLIQEQNAFPGVTTRMLARMASEVHLSFAESRKFFGDSKNVFVTGNPAREFPAEPRQACLDFFGLRGDLPTLLVFGGSRGARAINNALLRFCGRLEGKINLIWQTGSLDAERVTAEVSSSSTRWIGPYIQEMGKAYGAADLVLCRAGASSLAELTNLGKPSVLAPYPYAAADHQRHNARALVNAGAAIMIEDTNLADDASLETILDLLGDSERLDRMGHASRSEGYPGAAAELAGRIIALSKS.

UDP-N-acetyl-alpha-D-glucosamine is bound by residues 10–12, Asn-128, Arg-170, Ser-199, Ile-250, and Gln-295; that span reads TGG.

This sequence belongs to the glycosyltransferase 28 family. MurG subfamily.

It is found in the cell inner membrane. The enzyme catalyses di-trans,octa-cis-undecaprenyl diphospho-N-acetyl-alpha-D-muramoyl-L-alanyl-D-glutamyl-meso-2,6-diaminopimeloyl-D-alanyl-D-alanine + UDP-N-acetyl-alpha-D-glucosamine = di-trans,octa-cis-undecaprenyl diphospho-[N-acetyl-alpha-D-glucosaminyl-(1-&gt;4)]-N-acetyl-alpha-D-muramoyl-L-alanyl-D-glutamyl-meso-2,6-diaminopimeloyl-D-alanyl-D-alanine + UDP + H(+). The protein operates within cell wall biogenesis; peptidoglycan biosynthesis. In terms of biological role, cell wall formation. Catalyzes the transfer of a GlcNAc subunit on undecaprenyl-pyrophosphoryl-MurNAc-pentapeptide (lipid intermediate I) to form undecaprenyl-pyrophosphoryl-MurNAc-(pentapeptide)GlcNAc (lipid intermediate II). The protein is UDP-N-acetylglucosamine--N-acetylmuramyl-(pentapeptide) pyrophosphoryl-undecaprenol N-acetylglucosamine transferase of Chlorobaculum parvum (strain DSM 263 / NCIMB 8327) (Chlorobium vibrioforme subsp. thiosulfatophilum).